The primary structure comprises 579 residues: YTH domain-containing family protein 2 (579 aa).

A disordered region spans residues 1-45 (MSASSLLEQRPKGQGNKVQNGSVHQKDGLNDDDFEPYLSPQARPN). Ser2 is subject to N-acetylserine. Phosphoserine occurs at positions 2, 4, 5, 22, 39, and 196. The tract at residues 2–384 (SASSLLEQRP…QAGSGSTPSE (383 aa)) is localization to mRNA processing bodies (P-bodies). A disordered region spans residues 247-387 (AKQQPKLKTK…SGSTPSEPHP (141 aa)). A compositionally biased stretch (polar residues) spans 291 to 316 (ALVQNIGQPTQGSPQPVGQQANNSPP). The span at 337 to 349 (AQLSVQQQAAQPT) shows a compositional bias: low complexity. At Ser359 the chain carries Phosphoserine. The segment covering 359–371 (SGFGHNGVDGNGV) has biased composition (gly residues). Over residues 372–383 (GQSQAGSGSTPS) the composition is skewed to polar residues. Residues 385-579 (PHPVLEKLRS…VKKERQGRGK (195 aa)) are interaction with m6A-containing mRNAs. The residue at position 394 (Ser394) is a Phosphoserine. The 135-residue stretch at 410-544 (GRVFIIKSYS…EKAKQVLKII (135 aa)) folds into the YTH domain. RNA-binding positions include 416–418 (KSY), Asp422, 432–433 (WC), Asn462, Trp486, and Trp491.

The protein belongs to the YTHDF family. YTHDF2 subfamily. As to quaternary structure, interacts with CNOT1; interaction is direct and promotes recruitment of the CCR4-NOT complex. Interacts with YTHDF3. Interacts with RIDA/HRSP12; interaction leads to recruitment of the ribonuclease P/MRP complex. In terms of processing, ubiquitinated by the SCF(SKP2) complex, leading to its degradation. As to expression, highly expressed in induced pluripotent stem cells (iPSCs) and down-regulated during neural differentiation.

It localises to the cytoplasm. The protein resides in the cytosol. The protein localises to the P-body. Its subcellular location is the stress granule. It is found in the nucleus. Its function is as follows. Specifically recognizes and binds N6-methyladenosine (m6A)-containing RNAs, and regulates their stability. M6A is a modification present at internal sites of mRNAs and some non-coding RNAs and plays a role in mRNA stability and processing. Acts as a regulator of mRNA stability by promoting degradation of m6A-containing mRNAs via interaction with the CCR4-NOT and ribonuclease P/MRP complexes, depending on the context. The YTHDF paralogs (YTHDF1, YTHDF2 and YTHDF3) share m6A-containing mRNAs targets and act redundantly to mediate mRNA degradation and cellular differentiation. M6A-containing mRNAs containing a binding site for RIDA/HRSP12 (5'-GGUUC-3') are preferentially degraded by endoribonucleolytic cleavage: cooperative binding of RIDA/HRSP12 and YTHDF2 to transcripts leads to recruitment of the ribonuclease P/MRP complex. Other m6A-containing mRNAs undergo deadenylation via direct interaction between YTHDF2 and CNOT1, leading to recruitment of the CCR4-NOT and subsequent deadenylation of m6A-containing mRNAs. Required maternally to regulate oocyte maturation: probably acts by binding to m6A-containing mRNAs, thereby regulating maternal transcript dosage during oocyte maturation, which is essential for the competence of oocytes to sustain early zygotic development. Also required during spermatogenesis: regulates spermagonial adhesion by promoting degradation of m6A-containing transcripts coding for matrix metallopeptidases. Also involved in hematopoietic stem cells specification by binding to m6A-containing mRNAs, leading to promote their degradation. Also acts as a regulator of neural development by promoting m6A-dependent degradation of neural development-related mRNA targets. Inhibits neural specification of induced pluripotent stem cells by binding to methylated neural-specific mRNAs and promoting their degradation, thereby restraining neural differentiation. Regulates circadian regulation of hepatic lipid metabolism: acts by promoting m6A-dependent degradation of PPARA transcripts. Regulates the innate immune response to infection by inhibiting the type I interferon response: acts by binding to m6A-containing IFNB transcripts and promoting their degradation. May also act as a promoter of cap-independent mRNA translation following heat shock stress: upon stress, relocalizes to the nucleus and specifically binds mRNAs with some m6A methylation mark at their 5'-UTR, protecting demethylation of mRNAs by FTO, thereby promoting cap-independent mRNA translation. Regulates mitotic entry by promoting the phase-specific m6A-dependent degradation of WEE1 transcripts. Promotes formation of phase-separated membraneless compartments, such as P-bodies or stress granules, by undergoing liquid-liquid phase separation upon binding to mRNAs containing multiple m6A-modified residues: polymethylated mRNAs act as a multivalent scaffold for the binding of YTHDF proteins, juxtaposing their disordered regions and thereby leading to phase separation. The resulting mRNA-YTHDF complexes then partition into different endogenous phase-separated membraneless compartments, such as P-bodies, stress granules or neuronal RNA granules. May also recognize and bind RNAs modified by C5-methylcytosine (m5C) and act as a regulator of rRNA processing. Functionally, (Microbial infection) Promotes viral gene expression and replication of polyomavirus SV40: acts by binding to N6-methyladenosine (m6A)-containing viral RNAs. In terms of biological role, (Microbial infection) Promotes viral gene expression and virion production of kaposis sarcoma-associated herpesvirus (KSHV) at some stage of the KSHV life cycle (in iSLK.219 and iSLK.BAC16 cells). Acts by binding to N6-methyladenosine (m6A)-containing viral RNAs. The sequence is that of YTH domain-containing family protein 2 from Homo sapiens (Human).